We begin with the raw amino-acid sequence, 205 residues long: Large ribosomal subunit protein uL4 (205 aa).

Residues 43–97 (GKRQGTSKVKNRSAVRGGGKKPWRQKGTGRARQGSIRAPQWRGGGTVFGPTPRSY) are disordered. The segment covering 51 to 71 (VKNRSAVRGGGKKPWRQKGTG) has biased composition (basic residues).

The protein belongs to the universal ribosomal protein uL4 family. In terms of assembly, part of the 50S ribosomal subunit.

One of the primary rRNA binding proteins, this protein initially binds near the 5'-end of the 23S rRNA. It is important during the early stages of 50S assembly. It makes multiple contacts with different domains of the 23S rRNA in the assembled 50S subunit and ribosome. In terms of biological role, forms part of the polypeptide exit tunnel. This is Large ribosomal subunit protein uL4 from Lactobacillus acidophilus (strain ATCC 700396 / NCK56 / N2 / NCFM).